The chain runs to 731 residues: Catalase-peroxidase (731 aa).

Positions 98–226 (WHAAGTYRTA…LAAVQMGLIY (129 aa)) form a cross-link, tryptophyl-tyrosyl-methioninium (Trp-Tyr) (with M-252). His-99 serves as the catalytic Proton acceptor. A cross-link (tryptophyl-tyrosyl-methioninium (Tyr-Met) (with W-98)) is located at residues 226–252 (YVNPEGPDGNPDIVASGHDVIETFGRM). His-267 is a binding site for heme b.

It belongs to the peroxidase family. Peroxidase/catalase subfamily. As to quaternary structure, homodimer or homotetramer. Heme b is required as a cofactor. Formation of the three residue Trp-Tyr-Met cross-link is important for the catalase, but not the peroxidase activity of the enzyme.

It catalyses the reaction H2O2 + AH2 = A + 2 H2O. It carries out the reaction 2 H2O2 = O2 + 2 H2O. In terms of biological role, bifunctional enzyme with both catalase and broad-spectrum peroxidase activity. The sequence is that of Catalase-peroxidase from Ruegeria pomeroyi (strain ATCC 700808 / DSM 15171 / DSS-3) (Silicibacter pomeroyi).